A 296-amino-acid chain; its full sequence is GTPase Era (296 aa).

Positions 3–170 (KSGFVTIIGR…IELMVKHLNE (168 aa)) constitute an Era-type G domain. The tract at residues 11–18 (GRPNVGKS) is G1. Residue 11–18 (GRPNVGKS) participates in GTP binding. The interval 37 to 41 (QTTRN) is G2. Positions 58 to 61 (DTPG) are G3. GTP is bound by residues 58–62 (DTPGM) and 120–123 (NKID). The tract at residues 120 to 123 (NKID) is G4. The tract at residues 149–151 (ISA) is G5. Residues 201 to 277 (LSQEVPHGIA…NMKIWVKVKK (77 aa)) enclose the KH type-2 domain.

Belongs to the TRAFAC class TrmE-Era-EngA-EngB-Septin-like GTPase superfamily. Era GTPase family. In terms of assembly, monomer.

The protein localises to the cytoplasm. It is found in the cell membrane. In terms of biological role, an essential GTPase that binds both GDP and GTP, with rapid nucleotide exchange. Plays a role in 16S rRNA processing and 30S ribosomal subunit biogenesis and possibly also in cell cycle regulation and energy metabolism. In Clostridium acetobutylicum (strain ATCC 824 / DSM 792 / JCM 1419 / IAM 19013 / LMG 5710 / NBRC 13948 / NRRL B-527 / VKM B-1787 / 2291 / W), this protein is GTPase Era.